The primary structure comprises 940 residues: Reticulon-3 (940 aa).

The span at 1-24 shows a compositional bias: low complexity; that stretch reads MAESSAATQSPSVSSSSSGAEPST. Disordered regions lie at residues 1-32, 71-91, and 129-182; these read MAESSAATQSPSVSSSSSGAEPSTLGGGGGSP, SSEIYNPDPTTPLGSETLGSH, and DIPC…ALDL. Ala2 is subject to N-acetylalanine. Residues 2 to 771 lie on the Cytoplasmic side of the membrane; the sequence is AESSAATQSP…KKTGFVFGTT (770 aa). Phosphoserine is present on Ser31. Ser196, Ser204, Ser209, Ser212, Ser249, and Ser282 each carry phosphoserine. Disordered regions lie at residues 314–335, 381–405, and 428–512; these read AKQQADKSPCTTESTGLDRSEH, KGYLSSTKEAGGKGVPDSSQPISGS, and EVTE…LEGQ. Positions 430–447 are enriched in acidic residues; that stretch reads TEVDSSGESDDTVIEDTT. Over residues 472-490 the composition is skewed to basic and acidic residues; that stretch reads TSERENKETTSHETVRSEM. Positions 491 to 512 are enriched in polar residues; it reads YENSEQQQAHAETPTQRSLEGQ. Position 508 is a phosphoserine (Ser508). Thr572 is subject to Phosphothreonine. A phosphoserine mark is found at Ser575, Ser576, and Ser652. 2 disordered regions span residues 623-655 and 672-701; these read NKLSSSETKNTKSKYSEHSRETNGGAPKVSSDL and QVQAERMSPGGKLKRTFDPQSGPQNSSDIL. The segment covering 689-699 has biased composition (polar residues); that stretch reads DPQSGPQNSSD. The Reticulon domain occupies 752-940; that stretch reads VHDLIFWRDV…LPGIAKKKAE (189 aa). The helical intramembrane region spans 772–795; that stretch reads LIMLLSLAAFSVISVVSYLILALL. Topologically, residues 796 to 852 are cytoplasmic; it reads SVTISFRVYKSVIQAVQKSEEGHPFKAYLDVDITLSSEAFHSYMNAAMVHVNKALKL. Positions 853 to 875 form an intramembrane region, helical; the sequence is IIRLFLVEDLVDSLKLAVFMWLM. The Cytoplasmic segment spans residues 876–879; it reads TYVG. Positions 880–902 form an intramembrane region, helical; that stretch reads AVFNGITLLILAELLVFSVPIVY. The segment at 895-940 is interaction with FADD; the sequence is VFSVPIVYEKYKTQIDHYVGIARDQTKSIVEKIQAKLPGIAKKKAE. Residues 903 to 940 are Cytoplasmic-facing; the sequence is EKYKTQIDHYVGIARDQTKSIVEKIQAKLPGIAKKKAE. An interaction with BACE1 region spans residues 908–910; the sequence is QID.

As to quaternary structure, homodimer. Interacts with RTN4. Isoform 2 interacts with BACE1, BACE2, BCL2 and FADD. Interacts with ATL2. Interacts with TMEM33. Interacts with ATL1. Interacts with ZFYVE27 and with KIF5A in a ZFYVE27-dependent manner. Interacts with RIGI. Interacts with TRIM25. In terms of tissue distribution, present in olfactory bulb, olfactory epithelium and retina (at protein level).

It localises to the endoplasmic reticulum membrane. The protein localises to the golgi apparatus membrane. Functionally, may be involved in membrane trafficking in the early secretory pathway. Inhibits BACE1 activity and amyloid precursor protein processing. May induce caspase-8 cascade and apoptosis. May favor BCL2 translocation to the mitochondria upon endoplasmic reticulum stress. Induces the formation of endoplasmic reticulum tubules. Acts also as an inflammation-resolving regulator by interacting with both TRIM25 and RIGI, subsequently impairing RIGI 'Lys-63'-linked polyubiquitination leading to IRF3 and NF-kappa-B inhibition. In Rattus norvegicus (Rat), this protein is Reticulon-3 (Rtn3).